The sequence spans 538 residues: Inositol-3-phosphate synthase (538 aa).

NAD(+) contacts are provided by glycine 74, glycine 75, asparagine 76, asparagine 77, aspartate 150, serine 186, valine 187, glutamine 197, aspartate 198, arginine 200, threonine 247, alanine 248, asparagine 249, threonine 250, glycine 298, serine 299, aspartate 323, serine 326, asparagine 357, asparagine 358, aspartate 359, lysine 372, glycine 412, aspartate 413, aspartate 441, and serine 442.

The protein belongs to the myo-inositol 1-phosphate synthase family. As to quaternary structure, homotetramer. NAD(+) is required as a cofactor.

The protein resides in the cytoplasm. The catalysed reaction is D-glucose 6-phosphate = 1D-myo-inositol 3-phosphate. The protein operates within polyol metabolism; myo-inositol biosynthesis; myo-inositol from D-glucose 6-phosphate: step 1/2. In terms of biological role, key enzyme in myo-inositol biosynthesis pathway that catalyzes the conversion of glucose 6-phosphate to 1-myo-inositol 1-phosphate in a NAD-dependent manner. Rate-limiting enzyme in the synthesis of all inositol-containing compounds. The polypeptide is Inositol-3-phosphate synthase (INO1) (Candida glabrata (strain ATCC 2001 / BCRC 20586 / JCM 3761 / NBRC 0622 / NRRL Y-65 / CBS 138) (Yeast)).